Reading from the N-terminus, the 557-residue chain is Formate--tetrahydrofolate ligase 2 (557 aa).

66–73 contributes to the ATP binding site; the sequence is TPAGEGKT.

This sequence belongs to the formate--tetrahydrofolate ligase family.

It catalyses the reaction (6S)-5,6,7,8-tetrahydrofolate + formate + ATP = (6R)-10-formyltetrahydrofolate + ADP + phosphate. Its pathway is one-carbon metabolism; tetrahydrofolate interconversion. In Streptococcus pyogenes serotype M5 (strain Manfredo), this protein is Formate--tetrahydrofolate ligase 2.